A 990-amino-acid chain; its full sequence is MFCYSSLHAQIISGTVSAEGQVLPGAAVIIKGSTKGTSTDFDGYYTIEAQASDVLVFSYVGYANKEVTVGTNTQIDVALEADNTLDEVVVIGYGTQRKSDLTGSVSSVSAEDVNVNPVSRVDQALQGRAAGVQVTQTSGAPGAASVIRVRGGNSITGSNEPLWVIDGIVVGTNFNLNNINSNDIKSIEILKDASSIAIYGSRGANGVVLVTTKTGTGAGSSKPEVSANIYTSMQMVPELPKMLSQAEQIAYTNESAAFRGAAIPFPNDPSTYPNNDWFDLLLGPAPIYNADVSITGASENVSYYTSLNYFNQEGIVKTSGIEKYIFRSNLDIRLSDKLKTGFRVNYSYIDQQNGLVGYGNAIATLPTQPIYNEDGSYNGFDEVVGSPWSNPIANMALNTNETFRNNFLGSFYIDYSPSEKWIIRSTFSPDFDNSKQNRFTSSQSPNLLYLGEGGNASVRTVNTKGWNNENTIQYQSEIGENHRITALGGASFQKVSTEIVESEAFGITNDATGFNNLSNSDPTRNILTSDYSGFQIASFFGRLNYAYKDKYLLTLVGRTDGSSVFSDDNKYEFYPSIAAAWKISEEGFMQNQETFGELKLRASYGKSGNQAIDPYRTKGLLVEANTTLNGIQQTGLTLGRPSNPNLTWETTNSLDIALEASMFNGRVFAELNYYYKKTNDLLLDVTIPKQTGFNSQLQNVGSLENKGWEFSLNTTNVRTDNFNWKSTLMLSSNKNKILDLGGVDFIDLVVDELLGSGNTRLIVGESVPVFTGVKFLGTWKSQEEIDASGLRDPQVVGGAKYHDENGDGIISTDDAVVLGSPLPDLIFGFENTLSYKNLDFSFYFQGTQGNEVYNLRMRNHYFNRGEFTKFAEVADRWTPENPTSDIPRAGGDSVTGTPPNSAYVEDGSHIRLKTVRLAYNMPVDKMGMDGVKNATVYLTGTNLLLWSDFRLIDPEGSNFGRNGIGNIAQGYNDGSYPNPRTITLGLNVTF.

The TonB box motif lies at Asp-86 to Tyr-93. Residues Arg-97–Lys-213 enclose the TBDR plug domain. Positions Ser-220–Phe-990 constitute a TBDR beta-barrel domain. The disordered stretch occupies residues Thr-878 to Ala-902. The TonB C-terminal box motif lies at Gly-974 to Phe-990.

This sequence belongs to the TonB-dependent receptor family.

It localises to the cell outer membrane. In terms of biological role, tonB-dependent receptor probably involved in ulvan degradation. Ulvan is the main polysaccharide component of the Ulvales (green seaweed) cell wall. It is composed of disaccharide building blocks comprising 3-sulfated rhamnose (Rha3S) linked to D-glucuronic acid (GlcA), L-iduronic acid (IduA), or D-xylose (Xyl). The TonB-dependent receptor may mediate transport of ulvan oligosaccharides from the surface of the outer membrane to the periplasm for subsequent degradation. The protein is TonB-dependent receptor P26 of Formosa agariphila (strain DSM 15362 / KCTC 12365 / LMG 23005 / KMM 3901 / M-2Alg 35-1).